Reading from the N-terminus, the 381-residue chain is Homoserine O-succinyltransferase (381 aa).

Residues 45–360 (NAVLVCHALN…PHGHDAFLLD (316 aa)) form the AB hydrolase-1 domain. The Nucleophile role is filled by serine 151. Arginine 221 is a binding site for substrate. Catalysis depends on residues aspartate 321 and histidine 354. Aspartate 355 lines the substrate pocket.

It belongs to the AB hydrolase superfamily. MetX family. As to quaternary structure, homodimer.

The protein resides in the cytoplasm. It catalyses the reaction L-homoserine + succinyl-CoA = O-succinyl-L-homoserine + CoA. Its pathway is amino-acid biosynthesis; L-methionine biosynthesis via de novo pathway; O-succinyl-L-homoserine from L-homoserine: step 1/1. Its function is as follows. Transfers a succinyl group from succinyl-CoA to L-homoserine, forming succinyl-L-homoserine. The polypeptide is Homoserine O-succinyltransferase (Burkholderia lata (strain ATCC 17760 / DSM 23089 / LMG 22485 / NCIMB 9086 / R18194 / 383)).